Reading from the N-terminus, the 385-residue chain is MSNKDQEIKEEAPVAIEDLSNPVVVDSYNAAGIIANNAIKHVISKCVVGALVVDICQYGDDFIEAEAAKTFTKRKNLEKGIAFPTCVSVNNCVGHFSPLKGNTRTLKQGDVVKIDLGCHIDGYIAVGAHTIIIGNTSAESMTGKVADAICAAHYALEAALRMIRPGKTSNEVTQVIEKISDMYGVTSVSGILSHELKRFIIDGEKVIFSKNEPSQKIQTYEFQENEVYCIDIVMSTGEGKAREEADRPTIYRRNLDSTYKLKSKASRDFKDQIVKRYSALPFPLRNFDEKVSKLGLVELVEHQVLAAYPVLFDRSGCEVVQFKTTVLVLPNGNHKLIGTEFPLPFVRSEFSVTDDAIKALIASPLKINKKAAKKASATTIDVKMQ.

The protein belongs to the peptidase M24 family.

The polypeptide is Proliferation-associated protein A (prlA) (Dictyostelium discoideum (Social amoeba)).